The chain runs to 621 residues: Pentatricopeptide repeat-containing protein At1g12620 (621 aa).

PPR repeat units follow at residues 36-70 (GKVSYRERLRSGIVDIKEDDAVDLFQEMTRSRPRP), 71-105 (RLIDFSRLFSVVARTKQYDLVLDLCKQMELKGIAH), 106-140 (NLYTLSIMINCCCRCRKLSLAFSAMGKIIKLGYEP), 141-175 (DTVTFSTLINGLCLEGRVSEALELVDRMVEMGHKP), 176-210 (TLITLNALVNGLCLNGKVSDAVLLIDRMVETGFQP), 211-245 (NEVTYGPVLKVMCKSGQTALAMELLRKMEERKIKL), 246-280 (DAVKYSIIIDGLCKDGSLDNAFNLFNEMEIKGFKA), 281-315 (DIIIYTTLIRGFCYAGRWDDGAKLLRDMIKRKITP), 316-350 (DVVAFSALIDCFVKEGKLREAEELHKEMIQRGISP), 351-385 (DTVTYTSLIDGFCKENQLDKANHMLDLMVSKGCGP), 386-420 (NIRTFNILINGYCKANLIDDGLELFRKMSLRGVVA), 421-455 (DTVTYNTLIQGFCELGKLEVAKELFQEMVSRRVRP), 456-490 (DIVSYKILLDGLCDNGEPEKALEIFEKIEKSKMEL), 491-525 (DIGIYNIIIHGMCNASKVDDAWDLFCSLPLKGVKP), 526-560 (DVKTYNIMIGGLCKKGSLSEADLLFRKMEEDGHSP), and 561-595 (NGCTYNILIRAHLGEGDATKSAKLIEEIKRCGFSV).

Belongs to the PPR family. P subfamily.

The polypeptide is Pentatricopeptide repeat-containing protein At1g12620 (Arabidopsis thaliana (Mouse-ear cress)).